Consider the following 275-residue polypeptide: Formamidopyrimidine-DNA glycosylase (275 aa).

The Schiff-base intermediate with DNA role is filled by proline 2. Glutamate 3 acts as the Proton donor in catalysis. Lysine 59 (proton donor; for beta-elimination activity) is an active-site residue. DNA contacts are provided by histidine 94 and arginine 113. The FPG-type zinc-finger motif lies at 241 to 275 (LVHTHAKEPCQICGTIIQKTKVNGRGTYYCPNCQN). Arginine 265 functions as the Proton donor; for delta-elimination activity in the catalytic mechanism.

Belongs to the FPG family. In terms of assembly, monomer. Requires Zn(2+) as cofactor.

The catalysed reaction is Hydrolysis of DNA containing ring-opened 7-methylguanine residues, releasing 2,6-diamino-4-hydroxy-5-(N-methyl)formamidopyrimidine.. The enzyme catalyses 2'-deoxyribonucleotide-(2'-deoxyribose 5'-phosphate)-2'-deoxyribonucleotide-DNA = a 3'-end 2'-deoxyribonucleotide-(2,3-dehydro-2,3-deoxyribose 5'-phosphate)-DNA + a 5'-end 5'-phospho-2'-deoxyribonucleoside-DNA + H(+). Its function is as follows. Involved in base excision repair of DNA damaged by oxidation or by mutagenic agents. Acts as a DNA glycosylase that recognizes and removes damaged bases. Has a preference for oxidized purines, such as 7,8-dihydro-8-oxoguanine (8-oxoG). Has AP (apurinic/apyrimidinic) lyase activity and introduces nicks in the DNA strand. Cleaves the DNA backbone by beta-delta elimination to generate a single-strand break at the site of the removed base with both 3'- and 5'-phosphates. The protein is Formamidopyrimidine-DNA glycosylase of Ureaplasma parvum serovar 3 (strain ATCC 700970).